The primary structure comprises 40 residues: GGCINHGQPCDGDKNDCQCCRDNGYCNCDGIFGLKWNCKC.

Cystine bridges form between Cys-3–Cys-20, Cys-10–Cys-26, Cys-19–Cys-40, and Cys-28–Cys-38.

In terms of tissue distribution, expressed by the venom gland.

It localises to the secreted. Not toxic to mice by intracerebroventricular injection. This is U4-ctenitoxin-Co1c from Ctenus ornatus (Brazilian spider).